We begin with the raw amino-acid sequence, 282 residues long: uncharacterized protein (282 aa).

Tyr-50 functions as the Proton donor in the catalytic mechanism. His-115 lines the substrate pocket.

It belongs to the aldo/keto reductase family.

This is an uncharacterized protein from Saccharomyces cerevisiae (strain ATCC 204508 / S288c) (Baker's yeast).